The chain runs to 84 residues: Small ribosomal subunit protein bS16 (84 aa).

It belongs to the bacterial ribosomal protein bS16 family.

The polypeptide is Small ribosomal subunit protein bS16 (Ralstonia pickettii (strain 12J)).